The following is a 472-amino-acid chain: Coronin-6 (472 aa).

WD repeat units follow at residues 79–119, 129–169, 173–212, 216–259, and 264–304; these read GHTG…PVRN, GHSK…VLLS, IHPDVIHSVCWNSNGSLLATTCKDKTLRIIDPRKSQVVAE, AHEG…EPVA, and DTSN…PFVH. Residues 409-434 form a disordered region; the sequence is NILDVRPPASPRRSQSASEAPLSQQH. Positions 419–429 are enriched in low complexity; the sequence is PRRSQSASEAP. The stretch at 430–469 forms a coiled coil; it reads LSQQHTLETLLEEMKALRERVQAQEERITALENMLCELVD.

The sequence is that of Coronin-6 (Coro6) from Rattus norvegicus (Rat).